The sequence spans 421 residues: Ankyrin repeat domain-containing protein 61 (421 aa).

ANK repeat units lie at residues 27-57 (TLHSKLYEAIIKEDCNTIKTLLRNHPVNQPL), 74-103 (QPIFPIHLAAEYRKPQSLLCLLQHGADPEV), 107-146 (QGFTTLHLMLLNWPASSTTWSKPSTQIQKILMDIQNNAVL), 166-195 (NKHSALHLAIIHGTYPVLSFLAQNGAQVNA), 199-228 (SSMTPLHMAADILNKNMIETLIAFGANVNC), 233-272 (TGNTALKLAVCTASSKVGRLLAAGVGCIRLLLNNGAQVNA), 276-305 (EGQTALHEACFGGREAIISLLLEFEANVNI), and 309-342 (NGESPIYMYLQRSSNIRDRSLLARLLYRTYPLRL).

In Mus musculus (Mouse), this protein is Ankyrin repeat domain-containing protein 61 (Ankrd61).